Here is a 247-residue protein sequence, read N- to C-terminus: Cytochrome c oxidase subunit 2 (247 aa).

An N-terminal signal peptide occupies residues 1–11 (MFYLLNSIIMN). The Mitochondrial intermembrane portion of the chain corresponds to 12–38 (DVPTPYGMYFQDSATPNQEGILELHDN). A helical membrane pass occupies residues 39 to 59 (IMFYLFIILGLVSWLLFTIVR). At 60-78 (TYSKNPIAYKYIKHGQTIE) the chain is on the mitochondrial matrix side. A helical transmembrane segment spans residues 79-101 (IIWTIFPAVILLIIAFPSFILLY). Over 102-247 (LCDEVISPAM…PAFLEWLNEQ (146 aa)) the chain is Mitochondrial intermembrane. Cu cation-binding residues include His-182, Cys-217, Glu-219, Cys-221, His-225, and Met-228. Glu-219 provides a ligand contact to Mg(2+).

This sequence belongs to the cytochrome c oxidase subunit 2 family. In terms of assembly, component of the cytochrome c oxidase (complex IV, CIV), a multisubunit enzyme composed of a catalytic core of 3 subunits and several supernumerary subunits. The complex exists as a monomer or a dimer and forms supercomplexes (SCs) in the inner mitochondrial membrane with ubiquinol-cytochrome c oxidoreductase (cytochrome b-c1 complex, complex III, CIII). Cu cation serves as cofactor. The signal sequence of COX2 is processed by IMP1.

It localises to the mitochondrion inner membrane. The enzyme catalyses 4 Fe(II)-[cytochrome c] + O2 + 8 H(+)(in) = 4 Fe(III)-[cytochrome c] + 2 H2O + 4 H(+)(out). In terms of biological role, component of the cytochrome c oxidase, the last enzyme in the mitochondrial electron transport chain which drives oxidative phosphorylation. The respiratory chain contains 3 multisubunit complexes succinate dehydrogenase (complex II, CII), ubiquinol-cytochrome c oxidoreductase (cytochrome b-c1 complex, complex III, CIII) and cytochrome c oxidase (complex IV, CIV), that cooperate to transfer electrons derived from NADH and succinate to molecular oxygen, creating an electrochemical gradient over the inner membrane that drives transmembrane transport and the ATP synthase. Cytochrome c oxidase is the component of the respiratory chain that catalyzes the reduction of oxygen to water. Electrons originating from reduced cytochrome c in the intermembrane space (IMS) are transferred via the dinuclear copper A center (CU(A)) of subunit 2 and heme A of subunit 1 to the active site in subunit 1, a binuclear center (BNC) formed by heme A3 and copper B (CU(B)). The BNC reduces molecular oxygen to 2 water molecules using 4 electrons from cytochrome c in the IMS and 4 protons from the mitochondrial matrix. The polypeptide is Cytochrome c oxidase subunit 2 (COX2) (Kluyveromyces lactis (strain ATCC 8585 / CBS 2359 / DSM 70799 / NBRC 1267 / NRRL Y-1140 / WM37) (Yeast)).